We begin with the raw amino-acid sequence, 104 residues long: Large ribosomal subunit protein bL21 (104 aa).

Belongs to the bacterial ribosomal protein bL21 family. As to quaternary structure, part of the 50S ribosomal subunit. Contacts protein L20.

In terms of biological role, this protein binds to 23S rRNA in the presence of protein L20. This chain is Large ribosomal subunit protein bL21, found in Clostridium botulinum (strain Kyoto / Type A2).